The chain runs to 495 residues: Glucokinase (495 aa).

In terms of domain architecture, Hexokinase spans 3–483 (SALLDEAARI…SGVGAALIAL (481 aa)). The interval 57-206 (NGTEKGLYLA…GLPVRVAALV (150 aa)) is hexokinase small subdomain. Lysine 93 contacts ATP. Positions 149-175 (DLGFTFSFPVRQLGINKGTLIRWTKGF) are glucose-binding. Residues 207–472 (NDTVGTLMAR…KKIRIGISKD (266 aa)) are hexokinase large subdomain. 472–477 (DGSGVG) contacts ATP.

This sequence belongs to the hexokinase family. As to quaternary structure, monomer.

The enzyme catalyses D-glucose + ATP = D-glucose 6-phosphate + ADP + H(+). It catalyses the reaction a D-hexose + ATP = a D-hexose 6-phosphate + ADP + H(+). The catalysed reaction is D-mannose + ATP = D-mannose 6-phosphate + ADP + H(+). It carries out the reaction D-glucosamine + ATP = D-glucosamine 6-phosphate + ADP + H(+). The protein operates within carbohydrate metabolism; hexose metabolism. Its pathway is carbohydrate degradation; glycolysis; D-glyceraldehyde 3-phosphate and glycerone phosphate from D-glucose: step 1/4. In terms of biological role, the enzyme has great affinity for glucose. Mannose, 2-deoxyglucose and glucosamine can serve as substrates. This chain is Glucokinase (glkA), found in Aspergillus niger.